A 189-amino-acid polypeptide reads, in one-letter code: ADP-ribosylation factor H (189 aa).

GTP is bound by residues D34–T40, D75–Q79, and N134–D137.

This sequence belongs to the small GTPase superfamily. Arf family.

It localises to the golgi apparatus. Functionally, GTP-binding protein that may be involved in protein trafficking. May modulate vesicle budding and uncoating within the Golgi apparatus. This is ADP-ribosylation factor H (arrH) from Dictyostelium discoideum (Social amoeba).